A 798-amino-acid chain; its full sequence is Integrin beta-1 (798 aa).

The N-terminal stretch at 1–20 is a signal peptide; sequence MNLQLIFWIGLISSICCVFG. Residues 21 to 728 are Extracellular-facing; that stretch reads QADENRCLKA…ETPECPTGPD (708 aa). The 51-residue stretch at 26–76 folds into the PSI domain; that stretch reads RCLKANAKSCGECIQAGPNCGWCVNSTFLQEGMPTSARCDDLEALKKKGCH. Disulfide bonds link C27–C45, C35–C464, C38–C64, C48–C75, C207–C213, C261–C301, C401–C415, C435–C462, C466–C486, C477–C489, C491–C500, C502–C533, C516–C531, C525–C536, C538–C553, C555–C576, C560–C574, C568–C579, C581–C590, C592–C615, C599–C613, C607–C618, C620–C630, C633–C636, C640–C691, C646–C665, C649–C661, and C699–C723. N-linked (GlcNAc...) asparagine glycosylation occurs at N50. Over residues 75 to 91 the composition is skewed to basic and acidic residues; it reads CHPDDIENPRGSKDVKK. The segment at 75-107 is disordered; sequence CHPDDIENPRGSKDVKKNKNVTNRSKGTAEKLQ. N94 and N97 each carry an N-linked (GlcNAc...) asparagine glycan. Residues 140-378 enclose the VWFA domain; that stretch reads DYPIDLYYLM…QLIIDAYNSL (239 aa). The Mg(2+) site is built by S152 and S154. The Ca(2+) site is built by S154, D157, D158, and E189. Residues 207-213 are CX3CL1-binding; that stretch reads CTSEQNC. An N-linked (GlcNAc...) asparagine glycan is attached at N212. 4 residues coordinate Ca(2+): N244, D246, P248, and E249. Position 249 (E249) interacts with Mg(2+). The N-linked (GlcNAc...) asparagine glycan is linked to N269. The CX3CL1-binding stretch occupies residues 295 to 314; sequence LPNDGQCHLENDVYTMSHYY. A362 contributes to the Ca(2+) binding site. 3 N-linked (GlcNAc...) asparagine glycosylation sites follow: N363, N406, and N417. The tract at residues 383–465 is interaction with TMEM182; it reads ILENSKLPEG…IILQFICECE (83 aa). I-EGF domains follow at residues 466–501, 502–554, 555–591, and 592–631; these read CQNE…RHCE, CSTD…KFCE, CDNF…SACD, and CSLD…PTCE. N-linked (GlcNAc...) asparagine glycosylation occurs at N481. N520 is a glycosylation site (N-linked (GlcNAc...) asparagine). The N-linked (GlcNAc...) asparagine glycan is linked to N584. Residue N669 is glycosylated (N-linked (GlcNAc...) asparagine). Residues 729-751 form a helical membrane-spanning segment; the sequence is IIPIVAGVVAGIVLIGLALLLIW. The Cytoplasmic segment spans residues 752-798; it reads KLLMIIHDTREFAKFEKEKMNAKWDTGENPIYKSAVTTVVNPKYEGK. Residues 762–767 are signal for sorting from recycling endosomes; interaction with ACAP1; the sequence is EFAKFE. T777 is subject to Phosphothreonine. A Phosphotyrosine modification is found at Y783. Position 785 is a phosphoserine (S785). The interaction with ITGB1BP1 stretch occupies residues 785–792; it reads SAVTTVVN. T789 bears the Phosphothreonine mark. The residue at position 794 (K794) is an N6-acetyllysine; alternate. K794 participates in a covalent cross-link: Glycyl lysine isopeptide (Lys-Gly) (interchain with G-Cter in SUMO1); alternate.

It belongs to the integrin beta chain family. In terms of assembly, interacts with seprase FAP (seprase); the interaction occurs at the cell surface of invadopodia membrane in a collagen-dependent manner. Heterodimer of an alpha and a beta subunit. Beta-1 associates with either alpha-1, alpha-2, alpha-3, alpha-4, alpha-5, alpha-6, alpha-7, alpha-8, alpha-9, alpha-10, alpha-11 or alpha-V. ITGA6:ITGB1 is found in a complex with CD9; interaction takes place in oocytes and is involved in sperm-egg fusion. Binds LGALS3BP and NMRK2, when associated with alpha-7, but not with alpha-5. Interacts with FLNA, FLNB, FLNC and RANBP9. Interacts with KRT1 in the presence of RACK1 and SRC. Interacts with JAML; integrin alpha-4/beta-1 may regulate leukocyte to endothelial cells adhesion by controlling JAML homodimerization. Interacts with RAB21. Interacts (via the cytoplasmic region) with RAB25 (via the hypervariable C-terminal region). Interacts with MYO10. Interacts with ITGB1BP1 (via C-terminal region); the interaction is a prerequisite for focal adhesion disassembly. Interacts with TLN1; the interaction is prevented by competitive binding of ITGB1BP1. Interacts with ACAP1; required for ITGB1 recycling. Interacts with ASAP3. Interacts with FERMT2; the interaction is inhibited in presence of ITGB1BP1. Interacts with DAB2. Interacts with FGR and HCK. Interacts with alpha-7A and alpha-7B in adult skeletal muscle. Interacts with alpha-7B in cardiomyocytes of adult heart. Interacts with EMP2; the interaction may be direct or indirect and ITGB1 has a heterodimer form. ITGA5:ITGB1 interacts with CCN3. ITGA4:ITGB1 is found in a ternary complex with CX3CR1 and CX3CL1. ITGA5:ITGB1 interacts with FBN1. ITGA5:ITGB1 acts as a receptor for fibronectin FN1 and mediates R-G-D-dependent cell adhesion to FN1. ITGA5:ITGB1 interacts with IL1B. Interacts with MDK. ITGA4:ITGB1 interacts with MDK; this interaction mediates MDK-induced osteoblast cells migration through PXN phosphorylation. ITGA6:ITGB1 interacts with MDK; this interaction mediates MDK-induced neurite-outgrowth. ITGA5:ITGB1 interacts with ACE2. Interacts with TMEM182 and LAMB1. Interacts with tensin TNS3; TNS3 also interacts with PEAK1, thus acting as an adapter molecule to bridge the association of PEAK1 with ITGB1. Interacts with tensin TNS4; the interaction displaces tensin TNS3 from the ITGB1 cytoplasmic tail and promotes ITGB1 stability. Integrin ITGA9:ITGB1 interacts with SPP1/OPN (via N-terminus). Integrin ITGA9:ITGB1 interacts with TNC/TNFN3 (via the 3rd Fibronectin type-III domain). Integrins ITGA4:ITGB1 and ITGA9:ITGB1 interact with SVEP1 (via Sushi domain 21); thereby inhibit Ca(2+) intracellular signaling and as a result repress vasocontraction. ITGA4:ITGB1 and ITGA5:ITGB1 interacts with SELP. Interacts with CD248. ITGA5:ITGB1 interacts with IGFBP1. ITGA4:ITGB1 interacts with BCAM. Interacts with ADGRG6.

It is found in the cell membrane. The protein localises to the cell projection. The protein resides in the invadopodium membrane. Its subcellular location is the ruffle membrane. It localises to the recycling endosome. It is found in the melanosome. The protein localises to the lamellipodium. The protein resides in the ruffle. Its subcellular location is the cell junction. It localises to the focal adhesion. Its function is as follows. Integrins alpha-1/beta-1, alpha-2/beta-1, alpha-10/beta-1 and alpha-11/beta-1 are receptors for collagen. Integrins alpha-1/beta-1 and alpha-2/beta-2 recognize the proline-hydroxylated sequence G-F-P-G-E-R in collagen. Integrins alpha-2/beta-1, alpha-3/beta-1, alpha-4/beta-1, alpha-5/beta-1, alpha-8/beta-1, alpha-10/beta-1, alpha-11/beta-1 and alpha-V/beta-1 are receptors for fibronectin. Alpha-4/beta-1 recognizes one or more domains within the alternatively spliced CS-1 and CS-5 regions of fibronectin. Integrin alpha-5/beta-1 is a receptor for fibrinogen. Integrin alpha-1/beta-1, alpha-2/beta-1, alpha-6/beta-1 and alpha-7/beta-1 are receptors for lamimin. Integrin alpha-6/beta-1 (ITGA6:ITGB1) is present in oocytes and is involved in sperm-egg fusion. Integrin alpha-4/beta-1 is a receptor for VCAM1 and recognizes the sequence Q-I-D-S in VCAM1. Integrin alpha-9/beta-1 is a receptor for VCAM1, cytotactin and osteopontin. It recognizes the sequence A-E-I-D-G-I-E-L in cytotactin. Integrin alpha-3/beta-1 is a receptor for epiligrin, thrombospondin and CSPG4. Integrin alpha-3/beta-1 provides a docking site for FAP (seprase) at invadopodia plasma membranes in a collagen-dependent manner and hence may participate in the adhesion, formation of invadopodia and matrix degradation processes, promoting cell invasion. Alpha-3/beta-1 may mediate with LGALS3 the stimulation by CSPG4 of endothelial cells migration. Integrin alpha-V/beta-1 is a receptor for vitronectin. Beta-1 integrins recognize the sequence R-G-D in a wide array of ligands. When associated with alpha-7/beta-1 integrin, regulates cell adhesion and laminin matrix deposition. Involved in promoting endothelial cell motility and angiogenesis. Involved in osteoblast compaction through the fibronectin fibrillogenesis cell-mediated matrix assembly process and the formation of mineralized bone nodules. May be involved in up-regulation of the activity of kinases such as PKC via binding to KRT1. Together with KRT1 and RACK1, serves as a platform for SRC activation or inactivation. Plays a mechanistic adhesive role during telophase, required for the successful completion of cytokinesis. ITGA4:ITGB1 binds to fractalkine (CX3CL1) and may act as its coreceptor in CX3CR1-dependent fractalkine signaling. ITGA4:ITGB1 and ITGA5:ITGB1 bind to PLA2G2A via a site (site 2) which is distinct from the classical ligand-binding site (site 1) and this induces integrin conformational changes and enhanced ligand binding to site 1. ITGA5:ITGB1 acts as a receptor for fibrillin-1 (FBN1) and mediates R-G-D-dependent cell adhesion to FBN1. ITGA5:ITGB1 is a receptor for IL1B and binding is essential for IL1B signaling. ITGA5:ITGB3 is a receptor for soluble CD40LG and is required for CD40/CD40LG signaling. Plays an important role in myoblast differentiation and fusion during skeletal myogenesis. ITGA9:ITGB1 may play a crucial role in SVEP1/polydom-mediated myoblast cell adhesion. Integrins ITGA9:ITGB1 and ITGA4:ITGB1 repress PRKCA-mediated L-type voltage-gated channel Ca(2+) influx and ROCK-mediated calcium sensitivity in vascular smooth muscle cells via their interaction with SVEP1, thereby inhibit vasocontraction. This Felis catus (Cat) protein is Integrin beta-1 (ITGB1).